The chain runs to 1316 residues: Tetratricopeptide repeat protein 21B (1316 aa).

TPR repeat units follow at residues 108–141 (EKALYHAGLFLWHIGRHDKAREYIDRMIKISDGS), 145–178 (HVLKAWLDITRGKEPYTKKALKYFEEGLQDGNDT), 180–211 (ALLGKAQCLEMRQNYSGALETVNQIIVNFPSF), 285–323 (AQLFYNITLAFSRTCGRSQLILQKIQTLLERAFSLNPQQ), 324–357 (SEFATELGYQMILQGRVKEALKWYKTAMTLDETS), 492–525 (LQTVFLIAKVKYLSGDIEAAFNNLQHCLEHNPSY), 563–596 (PLYHLIKAQSQKKMGEIADAIKTLHMAMSLPGMK), 617–650 (LSIFLELIDVHRLNGEQHEATKVLQDAIHEFSGT), 722–755 (PRSFLLLGDAYMNILEPEEAIVAYEQALNQNPKD), 757–789 (TLASKMGKALIKTHNYSMAITYYEAALKTGQKN), 791–822 (LCYDLAELLLKLKWYDKAEKVLQHALAHEPVN), 831–864 (GRCQVLLAKVYSKMEKLGDAITALQQARELQARV), 884–917 (AEICAEIAKHSVAQRDYEKAIKFYREALVHCETD), 919–951 (KIMLELARLYLAQDDPDSCLRQCALLLQSDQDN), 952–985 (EAATMMMADLMFRKQDYEQAVFHLQQLLERKPDN), 1023–1056 (PGFQYCKGLYLWYTGEPNDALRHFNKARKDRDWG), 1197–1230 (EKSWLLLADIYIQSAKYDMAEDLLKRCLRHNRSC), 1232–1264 (KAYEYMGYIMEKEQAYTDAALNYEMAWKYSNRT), and 1266–1299 (PAVGYKLAFNYLKAKRYVDSIDICHQVLEAHPTY).

It belongs to the TTC21 family. Component of the IFT complex A (IFT-A) complex. IFT-A complex is divided into a core subcomplex composed of IFT122:IFT140:WDR19 which is associated with TULP3 and a peripheral subcomplex composed of IFT43:WDR35:TTC21B. Interacts directy with WDR35 and TTC21B. Interacts with TTC25.

It localises to the cytoplasm. The protein localises to the cytoskeleton. Its subcellular location is the cilium axoneme. Functionally, component of the IFT complex A (IFT-A), a complex required for retrograde ciliary transport and entry into cilia of G protein-coupled receptors (GPCRs). Essential for retrograde trafficking of IFT-1, IFT-B and GPCRs. Negatively modulates the SHH signal transduction. The chain is Tetratricopeptide repeat protein 21B from Homo sapiens (Human).